The following is a 758-amino-acid chain: Dachshund homolog 1 (758 aa).

Disordered stretches follow at residues 1–105 and 134–185; these read MAVP…SNCN and INAS…TPQN. Residues 20 to 53 show a composition bias toward low complexity; that stretch reads ISTSASSSGTTTSTSSATSSPAPSIGPPASSGPT. Residues 73–102 are compositionally biased toward gly residues; the sequence is TGGGGGGGGSGGGGGSSGNGGGGGGGGGGS. Over residues 140 to 163 the composition is skewed to low complexity; the sequence is SSSSSSSSSSSSSSSSSSSSSSSS. A compositionally biased stretch (polar residues) spans 174–185; the sequence is STPSPVENTPQN. The interval 189 to 275 is DACHbox-N; sequence KMVDLRGAKV…LISRKDFETL (87 aa). Positions 189-384 are interaction with SIX6 and HDAC3; it reads KMVDLRGAKV…VGSSDGSWDK (196 aa). Disordered regions lie at residues 280–302, 358–414, 474–532, and 544–564; these read TNASSRPGRPPKRTQSVTSPENS, SNNQ…PLSH, SPPS…RIPV, and MGLSPNVLPGPKEGDLAGHDM. Composition is skewed to polar residues over residues 292-301, 358-380, and 387-399; these read RTQSVTSPEN, SNNQHGADSENGDMNSSVGSSDG, and LPSSPSQGPQASI. Ser-491 carries the post-translational modification Phosphoserine. The span at 506 to 524 shows a compositional bias: low complexity; sequence SHPSSHRSSSVSSSPARTE. Residues 555–564 show a composition bias toward basic and acidic residues; it reads KEGDLAGHDM. The DACHbox-C stretch occupies residues 616–696; sequence SSIETLLTNI…KAKRKLQEAL (81 aa). The interval 627 to 706 is interaction with SIN3A; it reads GLLKVAIDNA…EFETKRREQA (80 aa). A coiled-coil region spans residues 630-718; it reads KVAIDNARAQ…TLKQAASTDS (89 aa).

This sequence belongs to the DACH/dachshund family. Interacts with SIX1, SIX6 and EYA3. Interacts with NCOR1 and HDAC3 through its N-terminus. Interacts with SIN3A through its C-terminus. Interacts with SMAD3 and SMAD4. In terms of tissue distribution, widely expressed. Isoform 2 is found in brain, heart, kidney, liver, leukocytes and spleen. Isoform 3 is found in liver and heart. Isoform 4 is found in spleen.

The protein resides in the nucleus. Its function is as follows. Transcription factor that is involved in regulation of organogenesis. Seems to be a regulator of SIX1, SIX6 and probably SIX5. Corepression of precursor cell proliferation in myoblasts by SIX1 is switched to coactivation through recruitment of EYA3 to the SIX1-DACH1 complex. Transcriptional activation also seems to involve association of CREBBP. Seems to act as a corepressor of SIX6 in regulating proliferation by directly repressing cyclin-dependent kinase inhibitors, including the p27Kip1 promoter. Inhibits TGF-beta signaling through interaction with SMAD4 and NCOR1. Binds to chromatin DNA via its DACHbox-N domain. The chain is Dachshund homolog 1 (DACH1) from Homo sapiens (Human).